The sequence spans 426 residues: Serine--tRNA ligase (426 aa).

233–235 (TAE) contacts L-serine. 264–266 (RSE) provides a ligand contact to ATP. Position 287 (Glu287) interacts with L-serine. 351–354 (EISS) contributes to the ATP binding site. Ser387 serves as a coordination point for L-serine.

The protein belongs to the class-II aminoacyl-tRNA synthetase family. Type-1 seryl-tRNA synthetase subfamily. As to quaternary structure, homodimer. The tRNA molecule binds across the dimer.

The protein resides in the cytoplasm. The catalysed reaction is tRNA(Ser) + L-serine + ATP = L-seryl-tRNA(Ser) + AMP + diphosphate + H(+). It catalyses the reaction tRNA(Sec) + L-serine + ATP = L-seryl-tRNA(Sec) + AMP + diphosphate + H(+). The protein operates within aminoacyl-tRNA biosynthesis; selenocysteinyl-tRNA(Sec) biosynthesis; L-seryl-tRNA(Sec) from L-serine and tRNA(Sec): step 1/1. Functionally, catalyzes the attachment of serine to tRNA(Ser). Is also able to aminoacylate tRNA(Sec) with serine, to form the misacylated tRNA L-seryl-tRNA(Sec), which will be further converted into selenocysteinyl-tRNA(Sec). This Pseudomonas fluorescens (strain Pf0-1) protein is Serine--tRNA ligase.